A 115-amino-acid chain; its full sequence is NADH-ubiquinone oxidoreductase chain 3 (115 aa).

The next 3 helical transmembrane spans lie at 4–24, 55–75, and 83–103; these read LTAL…AFWL, FFLV…LLPL, and YINI…LGLA.

Belongs to the complex I subunit 3 family. In terms of assembly, core subunit of respiratory chain NADH dehydrogenase (Complex I) which is composed of 45 different subunits. Interacts with TMEM186. Interacts with TMEM242.

Its subcellular location is the mitochondrion inner membrane. It carries out the reaction a ubiquinone + NADH + 5 H(+)(in) = a ubiquinol + NAD(+) + 4 H(+)(out). In terms of biological role, core subunit of the mitochondrial membrane respiratory chain NADH dehydrogenase (Complex I) which catalyzes electron transfer from NADH through the respiratory chain, using ubiquinone as an electron acceptor. Essential for the catalytic activity of complex I. The sequence is that of NADH-ubiquinone oxidoreductase chain 3 from Peromyscus polionotus (Oldfield mouse).